We begin with the raw amino-acid sequence, 230 residues long: 7-cyano-7-deazaguanine synthase (230 aa).

16–26 (LSGGLDSMVSG) is a binding site for ATP. Residues C195, C205, C208, and C211 each contribute to the Zn(2+) site.

Belongs to the QueC family. It depends on Zn(2+) as a cofactor.

The enzyme catalyses 7-carboxy-7-deazaguanine + NH4(+) + ATP = 7-cyano-7-deazaguanine + ADP + phosphate + H2O + H(+). Its pathway is purine metabolism; 7-cyano-7-deazaguanine biosynthesis. Functionally, catalyzes the ATP-dependent conversion of 7-carboxy-7-deazaguanine (CDG) to 7-cyano-7-deazaguanine (preQ(0)). The sequence is that of 7-cyano-7-deazaguanine synthase from Rhizorhabdus wittichii (strain DSM 6014 / CCUG 31198 / JCM 15750 / NBRC 105917 / EY 4224 / RW1) (Sphingomonas wittichii).